The following is a 444-amino-acid chain: Exopolygalacturonase clone GBGA483 (444 aa).

Residues M1–A23 form the signal peptide. PbH1 repeat units lie at residues C220–R246, S247–D268, T270–S290, V300–T321, and A330–Q351. Residue N222 is glycosylated (N-linked (GlcNAc...) asparagine). D261 functions as the Proton donor in the catalytic mechanism. A disulfide bond links C263 and C280. The active site involves H284. A glycan (N-linked (GlcNAc...) asparagine) is linked at N342. Cystine bridges form between C391–C397 and C420–C436.

The protein belongs to the glycosyl hydrolase 28 family.

It is found in the secreted. The protein resides in the cell wall. The catalysed reaction is [(1-&gt;4)-alpha-D-galacturonosyl](n) + H2O = alpha-D-galacturonate + [(1-&gt;4)-alpha-D-galacturonosyl](n-1). Functionally, may function in depolymerizing pectin during pollen development, germination, and tube growth. Acts as an exo-polygalacturonase. This Arabidopsis thaliana (Mouse-ear cress) protein is Exopolygalacturonase clone GBGA483.